The primary structure comprises 216 residues: Protein GrpE (216 aa).

Disordered stretches follow at residues 1–45 (MTEE…LDPT) and 185–216 (RVAV…TEEV). Residues 205–216 (TDDEESGGTEEV) are compositionally biased toward acidic residues.

This sequence belongs to the GrpE family. Homodimer.

It is found in the cytoplasm. Its function is as follows. Participates actively in the response to hyperosmotic and heat shock by preventing the aggregation of stress-denatured proteins, in association with DnaK and GrpE. It is the nucleotide exchange factor for DnaK and may function as a thermosensor. Unfolded proteins bind initially to DnaJ; upon interaction with the DnaJ-bound protein, DnaK hydrolyzes its bound ATP, resulting in the formation of a stable complex. GrpE releases ADP from DnaK; ATP binding to DnaK triggers the release of the substrate protein, thus completing the reaction cycle. Several rounds of ATP-dependent interactions between DnaJ, DnaK and GrpE are required for fully efficient folding. This Streptomyces griseus subsp. griseus (strain JCM 4626 / CBS 651.72 / NBRC 13350 / KCC S-0626 / ISP 5235) protein is Protein GrpE.